The primary structure comprises 327 residues: Spermidine/putrescine import ATP-binding protein PotA (327 aa).

Residues 5-235 form the ABC transporter domain; the sequence is IKVEAVEKHF…PKTLFVATFI (231 aa). 37-44 serves as a coordination point for ATP; the sequence is GPSGCGKT.

It belongs to the ABC transporter superfamily. Spermidine/putrescine importer (TC 3.A.1.11.1) family. In terms of assembly, the complex is composed of two ATP-binding proteins (PotA), two transmembrane proteins (PotB and PotC) and a solute-binding protein (PotD).

The protein resides in the cell membrane. It carries out the reaction ATP + H2O + polyamine-[polyamine-binding protein]Side 1 = ADP + phosphate + polyamineSide 2 + [polyamine-binding protein]Side 1.. In terms of biological role, part of the ABC transporter complex PotABCD involved in spermidine/putrescine import. Responsible for energy coupling to the transport system. The chain is Spermidine/putrescine import ATP-binding protein PotA from Bacillus thuringiensis (strain Al Hakam).